Here is a 620-residue protein sequence, read N- to C-terminus: Chaperone protein HscA homolog (620 aa).

It belongs to the heat shock protein 70 family.

Functionally, chaperone involved in the maturation of iron-sulfur cluster-containing proteins. Has a low intrinsic ATPase activity which is markedly stimulated by HscB. The sequence is that of Chaperone protein HscA homolog from Acinetobacter baumannii (strain SDF).